A 407-amino-acid chain; its full sequence is Transmembrane protein 184B (407 aa).

Residues 1-28 (MTVRGAALAPDPASPTTTTASPSVSATP) are compositionally biased toward low complexity. The tract at residues 1–31 (MTVRGAALAPDPASPTTTTASPSVSATPEGS) is disordered. 7 helical membrane-spanning segments follow: residues 40–60 (FLMT…ALLI), 84–104 (ILFI…FFTN), 121–141 (FVIY…SAIM), 178–198 (LQFC…QAFG), 214–234 (VTII…LFYF), 249–269 (FFMV…LAIL), and 290–310 (VAAG…ALAL). The segment at 369–395 (TLEPGPTWRGGTHSLSRSHSLSGARDN) is disordered. A phosphoserine mark is found at Ser-388, Ser-402, and Ser-403.

It belongs to the TMEM184 family.

It localises to the membrane. May activate the MAP kinase signaling pathway. The sequence is that of Transmembrane protein 184B (Tmem184b) from Mus musculus (Mouse).